The following is a 318-amino-acid chain: Aspartate carbamoyltransferase catalytic subunit (318 aa).

Residues R58 and T59 each coordinate carbamoyl phosphate. K86 contributes to the L-aspartate binding site. Carbamoyl phosphate-binding residues include R108, H141, and Q144. Residues R174 and R226 each contribute to the L-aspartate site. Carbamoyl phosphate-binding residues include G270 and P271.

This sequence belongs to the aspartate/ornithine carbamoyltransferase superfamily. ATCase family. As to quaternary structure, heterododecamer (2C3:3R2) of six catalytic PyrB chains organized as two trimers (C3), and six regulatory PyrI chains organized as three dimers (R2).

The enzyme catalyses carbamoyl phosphate + L-aspartate = N-carbamoyl-L-aspartate + phosphate + H(+). It functions in the pathway pyrimidine metabolism; UMP biosynthesis via de novo pathway; (S)-dihydroorotate from bicarbonate: step 2/3. Its function is as follows. Catalyzes the condensation of carbamoyl phosphate and aspartate to form carbamoyl aspartate and inorganic phosphate, the committed step in the de novo pyrimidine nucleotide biosynthesis pathway. The sequence is that of Aspartate carbamoyltransferase catalytic subunit from Lactobacillus helveticus (strain DPC 4571).